The sequence spans 184 residues: Ribosome-recycling factor (184 aa).

It belongs to the RRF family.

The protein resides in the cytoplasm. Its function is as follows. Responsible for the release of ribosomes from messenger RNA at the termination of protein biosynthesis. May increase the efficiency of translation by recycling ribosomes from one round of translation to another. The protein is Ribosome-recycling factor of Bifidobacterium animalis subsp. lactis (strain AD011).